Reading from the N-terminus, the 378-residue chain is REST corepressor 3 (378 aa).

The 83-residue stretch at 1 to 83 (MRVGAEYQAR…KSLADLPNFT (83 aa)) folds into the ELM2 domain. The 52-residue stretch at 84–135 (PFPDEWTVEDKVLFEQAFSFHGKSFHRIQQMLPDKTIASLVKYYYSWKKTRS) folds into the SANT domain. The interval 147–219 (LANRNNQGDS…SQRSKCRPPK (73 aa)) is disordered. Residues 162 to 184 (EPHPMDGNDSDYDPKKEAKKEGN) are compositionally biased toward basic and acidic residues. The segment covering 205–217 (QHRHHSQRSKCRP) has biased composition (basic residues). A coiled-coil region spans residues 238–273 (ANTILRRLDMELISLKRQVQNAKQVNSALKQKMEGG). The disordered stretch occupies residues 337–356 (TASSTSCCSCSPPSASAAPT).

Belongs to the CoREST family.

Its subcellular location is the nucleus. May act as a component of a corepressor complex that represses transcription. The sequence is that of REST corepressor 3 (RCOR3) from Gallus gallus (Chicken).